Reading from the N-terminus, the 456-residue chain is Bifunctional protein GlmU (456 aa).

The interval 1 to 229 (MLNSAMSVVI…ISETDGVNNR (229 aa)) is pyrophosphorylase. Residues 11 to 14 (LAAG), lysine 25, glutamine 76, 81 to 82 (GT), 103 to 105 (YGD), glycine 140, glutamate 154, asparagine 169, and asparagine 227 each bind UDP-N-acetyl-alpha-D-glucosamine. Residue aspartate 105 coordinates Mg(2+). Asparagine 227 contacts Mg(2+). The segment at 230-250 (LQLSRLERIYQAEQAEKLLLS) is linker. Residues 251-456 (GVMLRDPARF…QGWQRPVKKK (206 aa)) form an N-acetyltransferase region. Arginine 333 and lysine 351 together coordinate UDP-N-acetyl-alpha-D-glucosamine. Histidine 363 serves as the catalytic Proton acceptor. The UDP-N-acetyl-alpha-D-glucosamine site is built by tyrosine 366 and asparagine 377. Acetyl-CoA-binding positions include alanine 380, 386 to 387 (NY), serine 405, alanine 423, and arginine 440.

This sequence in the N-terminal section; belongs to the N-acetylglucosamine-1-phosphate uridyltransferase family. The protein in the C-terminal section; belongs to the transferase hexapeptide repeat family. In terms of assembly, homotrimer. Mg(2+) serves as cofactor.

The protein localises to the cytoplasm. The catalysed reaction is alpha-D-glucosamine 1-phosphate + acetyl-CoA = N-acetyl-alpha-D-glucosamine 1-phosphate + CoA + H(+). It catalyses the reaction N-acetyl-alpha-D-glucosamine 1-phosphate + UTP + H(+) = UDP-N-acetyl-alpha-D-glucosamine + diphosphate. The protein operates within nucleotide-sugar biosynthesis; UDP-N-acetyl-alpha-D-glucosamine biosynthesis; N-acetyl-alpha-D-glucosamine 1-phosphate from alpha-D-glucosamine 6-phosphate (route II): step 2/2. It functions in the pathway nucleotide-sugar biosynthesis; UDP-N-acetyl-alpha-D-glucosamine biosynthesis; UDP-N-acetyl-alpha-D-glucosamine from N-acetyl-alpha-D-glucosamine 1-phosphate: step 1/1. It participates in bacterial outer membrane biogenesis; LPS lipid A biosynthesis. In terms of biological role, catalyzes the last two sequential reactions in the de novo biosynthetic pathway for UDP-N-acetylglucosamine (UDP-GlcNAc). The C-terminal domain catalyzes the transfer of acetyl group from acetyl coenzyme A to glucosamine-1-phosphate (GlcN-1-P) to produce N-acetylglucosamine-1-phosphate (GlcNAc-1-P), which is converted into UDP-GlcNAc by the transfer of uridine 5-monophosphate (from uridine 5-triphosphate), a reaction catalyzed by the N-terminal domain. This chain is Bifunctional protein GlmU, found in Salmonella choleraesuis (strain SC-B67).